Here is a 301-residue protein sequence, read N- to C-terminus: Thymidylate synthase (301 aa).

DUMP contacts are provided by residues Arg-38 and 163–164 (RR). Cys-183 (nucleophile) is an active-site residue. DUMP contacts are provided by residues 203-206 (RSGD), Asn-214, and 244-246 (HIY). Asp-206 lines the (6R)-5,10-methylene-5,6,7,8-tetrahydrofolate pocket. Ala-300 is a binding site for (6R)-5,10-methylene-5,6,7,8-tetrahydrofolate.

It belongs to the thymidylate synthase family. In terms of assembly, homodimer.

The enzyme catalyses dUMP + (6R)-5,10-methylene-5,6,7,8-tetrahydrofolate = 7,8-dihydrofolate + dTMP. Its pathway is pyrimidine metabolism; dTTP biosynthesis. Its function is as follows. Catalyzes the reductive methylation of deoxyuridylate to thymidylate. This is Thymidylate synthase from Varicella-zoster virus (strain Dumas) (HHV-3).